A 51-amino-acid chain; its full sequence is Large ribosomal subunit protein bL33 (51 aa).

Residues 1–24 (MREKIRLNSSAGTGHFYTTDKNKR) form a disordered region.

This sequence belongs to the bacterial ribosomal protein bL33 family.

In Cellvibrio japonicus (strain Ueda107) (Pseudomonas fluorescens subsp. cellulosa), this protein is Large ribosomal subunit protein bL33.